A 351-amino-acid polypeptide reads, in one-letter code: Cardiolipin synthase (CMP-forming) (351 aa).

Positions 74–120 (PAPQLSASHQHQAQQQQQQTKQPQQPYDPQQDQVPSTSTASSSKPAA) are disordered. The segment covering 76–120 (PQLSASHQHQAQQQQQQTKQPQQPYDPQQDQVPSTSTASSSKPAA) has biased composition (low complexity). 5 consecutive transmembrane segments (helical) span residues 139–159 (PLIG…ALAV), 191–211 (VLIG…GWVA), 251–271 (AAAA…GGGG), 280–300 (PLLI…GYLL), and 321–341 (LIMG…LAYG).

It belongs to the CDP-alcohol phosphatidyltransferase class-I family. Mn(2+) is required as a cofactor.

The protein localises to the mitochondrion inner membrane. The enzyme catalyses a CDP-1,2-diacyl-sn-glycerol + a 1,2-diacyl-sn-glycero-3-phospho-(1'-sn-glycerol) = a cardiolipin + CMP + H(+). In terms of biological role, catalyzes the synthesis of cardiolipin (CL) (diphosphatidylglycerol) by specifically transferring a phosphatidyl group from CDP-diacylglycerol to phosphatidylglycerol (PG). CL is a key phospholipid in mitochondrial membranes and plays important roles in maintaining the functional integrity and dynamics of mitochondria under both optimal and stress conditions. Cannot catalyze the phosphatidyl group transfer from one PG molecule to another to form CL. This chain is Cardiolipin synthase (CMP-forming), found in Chlamydomonas reinhardtii (Chlamydomonas smithii).